The sequence spans 197 residues: Phospholipid hydroperoxide glutathione peroxidase (197 aa).

A Phosphoserine modification is found at Ser-40. Sec-73 is a catalytic residue. A non-standard amino acid (selenocysteine) is located at residue Sec-73.

The protein belongs to the glutathione peroxidase family. Monomer. Has a tendency to form higher mass oligomers. Interacts with FUNDC1; this interaction promotes GPX4 recruitment into mitochondria through TOM/TIM complex where it is degraded by mitophagy.

It is found in the mitochondrion. Its subcellular location is the cytoplasm. The enzyme catalyses a hydroperoxy polyunsaturated fatty acid + 2 glutathione = a hydroxy polyunsaturated fatty acid + glutathione disulfide + H2O. It carries out the reaction 2 glutathione + H2O2 = glutathione disulfide + 2 H2O. The catalysed reaction is tert-butyl hydroperoxide + 2 glutathione = tert-butanol + glutathione disulfide + H2O. It catalyses the reaction cumene hydroperoxide + 2 glutathione = 2-phenylpropan-2-ol + glutathione disulfide + H2O. The enzyme catalyses (9S)-hydroperoxy-(10E,12Z)-octadecadienoate + 2 glutathione = (9S)-hydroxy-(10E,12Z)-octadecadienoate + glutathione disulfide + H2O. It carries out the reaction (13S)-hydroperoxy-(9Z,11E)-octadecadienoate + 2 glutathione = (13S)-hydroxy-(9Z,11E)-octadecadienoate + glutathione disulfide + H2O. The catalysed reaction is (5S)-hydroperoxy-(6E,8Z,11Z,14Z)-eicosatetraenoate + 2 glutathione = (5S)-hydroxy-(6E,8Z,11Z,14Z)-eicosatetraenoate + glutathione disulfide + H2O. It catalyses the reaction (12R)-hydroperoxy-(5Z,8Z,10E,14Z)-eicosatetraenoate + 2 glutathione = (12R)-hydroxy-(5Z,8Z,10E,14Z)-eicosatetraenoate + glutathione disulfide + H2O. The enzyme catalyses (12S)-hydroperoxy-(5Z,8Z,10E,14Z)-eicosatetraenoate + 2 glutathione = (12S)-hydroxy-(5Z,8Z,10E,14Z)-eicosatetraenoate + glutathione disulfide + H2O. It carries out the reaction (15S)-hydroperoxy-(5Z,8Z,11Z,13E)-eicosatetraenoate + 2 glutathione = (15S)-hydroxy-(5Z,8Z,11Z,13E)-eicosatetraenoate + glutathione disulfide + H2O. The catalysed reaction is (5S)-hydroperoxy-(6E,8Z,11Z,14Z,17Z)-eicosapentaenoate + 2 glutathione = (5S)-hydroxy-(6E,8Z,11Z,14Z,17Z)-eicosapentaenoate + glutathione disulfide + H2O. It catalyses the reaction (12S)-hydroperoxy-(5Z,8Z,10E,14Z,17Z)-eicosapentaenoate + 2 glutathione = (12S)-hydroxy-(5Z,8Z,10E,14Z,17Z)-eicosapentaenoate + glutathione disulfide + H2O. The enzyme catalyses (15S)-hydroperoxy-(5Z,8Z,11Z,13E,17Z)-eicosapentaenoate + 2 glutathione = (15S)-hydroxy-(5Z,8Z,11Z,13E,17Z)-eicosapentaenoate + glutathione disulfide + H2O. It carries out the reaction (15S)-hydroperoxy-(11Z,13E)-eicosadienoate + 2 glutathione = (15S)-hydroxy-(11Z,13E)-eicosadienoate + glutathione disulfide + H2O. The catalysed reaction is (17S)-hydroperoxy-(4Z,7Z,10Z,13Z,15E,19Z)-docosahexaenoate + 2 glutathione = (17S)-hydroxy-(4Z,7Z,10Z,13Z,15E,19Z)-docosahexaenoate + glutathione disulfide + H2O. It catalyses the reaction a hydroperoxy-1,2-diacyl-glycero-3-phosphocholine + 2 glutathione = a hydroxy-1,2-diacyl-glycero-3-phosphocholine + glutathione disulfide + H2O. Functionally, essential antioxidant peroxidase that directly reduces phospholipid hydroperoxide even if they are incorporated in membranes and lipoproteins. Can also reduce fatty acid hydroperoxide, cholesterol hydroperoxide and thymine hydroperoxide. Plays a key role in protecting cells from oxidative damage by preventing membrane lipid peroxidation. Required to prevent cells from ferroptosis, a non-apoptotic cell death resulting from an iron-dependent accumulation of lipid reactive oxygen species. The presence of selenocysteine (Sec) versus Cys at the active site is essential for life: it provides resistance to overoxidation and prevents cells against ferroptosis. The presence of Sec at the active site is also essential for the survival of a specific type of parvalbumin-positive interneurons, thereby preventing against fatal epileptic seizures. May be required to protect cells from the toxicity of ingested lipid hydroperoxides. Required for normal sperm development and male fertility. Essential for maturation and survival of photoreceptor cells. Plays a role in a primary T-cell response to viral and parasitic infection by protecting T-cells from ferroptosis and by supporting T-cell expansion. Plays a role of glutathione peroxidase in platelets in the arachidonic acid metabolism. Reduces hydroperoxy ester lipids formed by a 15-lipoxygenase that may play a role as down-regulator of the cellular 15-lipoxygenase pathway. Can also reduce small soluble hydroperoxides such as H2O2, cumene hydroperoxide and tert-butyl hydroperoxide. The chain is Phospholipid hydroperoxide glutathione peroxidase from Hylobates lar (Lar gibbon).